Here is a 538-residue protein sequence, read N- to C-terminus: Syncytin-2 (538 aa).

The N-terminal stretch at 1 to 15 (MGLLLLVLILTPSLA) is a signal peptide. At 16–478 (AYRHPDFPLL…GWLNWEGTWK (463 aa)) the chain is on the extracellular side. The CXXC motif lies at 43 to 46 (CWLC). 3 disulfides stabilise this stretch: Cys-43–Cys-46, Cys-43–Cys-439, and Cys-431–Cys-438. N-linked (GlcNAc...) asparagine glycosylation is found at Asn-133, Asn-146, Asn-177, Asn-220, Asn-241, Asn-247, Asn-312, and Asn-332. The interval 354-374 (FIPLLAGLGILAGTGTGIAGI) is fusion peptide. Residues 414-430 (LQNRRGLDMLTAAQGGI) carry the CKS-17 motif. The CX6CC signature appears at 431–439 (CLALDEKCC). Asn-443 carries N-linked (GlcNAc...) asparagine glycosylation. The chain crosses the membrane as a helical span at residues 479–499 (WFSWVLPLTGPLVSLLLLLLF). Residues 500–538 (GPCLLNLITQFVSSRLQAIKLQTNLSAGRHPRNIQESPF) lie on the Cytoplasmic side of the membrane.

The protein belongs to the gamma type-C retroviral envelope protein family. HERV class-I FRD env subfamily. As to quaternary structure, the surface and transmembrane proteins form a heterodimer. They are attached by non-covalent interactions or by a labile interchain disulfide bond. In terms of processing, specific enzymatic cleavages in vivo yield the mature SU and TM proteins. Post-translationally, the CXXC motif is highly conserved across a broad range of retroviral envelope proteins. It is thought to participate in the formation of a labile disulfide bond possibly with the CX6CC motif present in the transmembrane protein.

The protein resides in the virion. It localises to the cell membrane. Functionally, this endogenous retroviral envelope protein has retained its original fusogenic properties and participates in trophoblast fusion and the formation of a syncytium during placenta morphogenesis. The interaction with MFSD2A is apparently important for this process. In terms of biological role, endogenous envelope proteins may have kept, lost or modified their original function during evolution but this one can still make pseudotypes with MLV, HIV-1 or SIV-1 virions and confer infectivity. Retroviral envelope proteins mediate receptor recognition and membrane fusion during early infection. The surface protein mediates receptor recognition, while the transmembrane protein anchors the envelope heterodimer to the viral membrane through one transmembrane domain. The other hydrophobic domain, called fusion peptide, mediates fusion of the viral membrane with the target cell membrane. The protein is Syncytin-2 (ERVFRD-1) of Pan troglodytes (Chimpanzee).